The primary structure comprises 158 residues: MFRIGQGFDVHAFEEGRPLIIGGITIPHEKGLVGHSDADVLLHTVTDAALGAIGEGDIGRHFPDTDPAFKDADSAKLLEYIWKIVEDKGYILGNVDCTIMAQRPKMAPYIEQMQNRIAELLHAEPSQVNVKATTTERLGFTGREEGIAAMATILLMKK.

Asp9 and His11 together coordinate a divalent metal cation. Residues 9–11 (DVH) and 35–36 (HS) contribute to the 4-CDP-2-C-methyl-D-erythritol 2-phosphate site. Residue His43 participates in a divalent metal cation binding. Residues 57-59 (DIG), 62-66 (FPDTD), 101-107 (AQRPKMA), 133-136 (TTTE), Phe140, and Arg143 each bind 4-CDP-2-C-methyl-D-erythritol 2-phosphate.

Belongs to the IspF family. In terms of assembly, homotrimer. Requires a divalent metal cation as cofactor.

It catalyses the reaction 4-CDP-2-C-methyl-D-erythritol 2-phosphate = 2-C-methyl-D-erythritol 2,4-cyclic diphosphate + CMP. Its pathway is isoprenoid biosynthesis; isopentenyl diphosphate biosynthesis via DXP pathway; isopentenyl diphosphate from 1-deoxy-D-xylulose 5-phosphate: step 4/6. Its function is as follows. Involved in the biosynthesis of isopentenyl diphosphate (IPP) and dimethylallyl diphosphate (DMAPP), two major building blocks of isoprenoid compounds. Catalyzes the conversion of 4-diphosphocytidyl-2-C-methyl-D-erythritol 2-phosphate (CDP-ME2P) to 2-C-methyl-D-erythritol 2,4-cyclodiphosphate (ME-CPP) with a corresponding release of cytidine 5-monophosphate (CMP). The chain is 2-C-methyl-D-erythritol 2,4-cyclodiphosphate synthase from Lysinibacillus sphaericus (strain C3-41).